Here is a 187-residue protein sequence, read N- to C-terminus: ATP synthase subunit b, chloroplastic (187 aa).

The helical transmembrane segment at 29–49 (LAVVLGVLIYLGKGVCAGCIL) threads the bilayer.

Belongs to the ATPase B chain family. In terms of assembly, F-type ATPases have 2 components, F(1) - the catalytic core - and F(0) - the membrane proton channel. F(1) has five subunits: alpha(3), beta(3), gamma(1), delta(1), epsilon(1). F(0) has four main subunits: a(1), b(1), b'(1) and c(10-14). The alpha and beta chains form an alternating ring which encloses part of the gamma chain. F(1) is attached to F(0) by a central stalk formed by the gamma and epsilon chains, while a peripheral stalk is formed by the delta, b and b' chains.

It localises to the plastid. The protein localises to the chloroplast thylakoid membrane. Its function is as follows. F(1)F(0) ATP synthase produces ATP from ADP in the presence of a proton or sodium gradient. F-type ATPases consist of two structural domains, F(1) containing the extramembraneous catalytic core and F(0) containing the membrane proton channel, linked together by a central stalk and a peripheral stalk. During catalysis, ATP synthesis in the catalytic domain of F(1) is coupled via a rotary mechanism of the central stalk subunits to proton translocation. In terms of biological role, component of the F(0) channel, it forms part of the peripheral stalk, linking F(1) to F(0). The sequence is that of ATP synthase subunit b, chloroplastic from Angiopteris evecta (Mule's foot fern).